The following is a 347-amino-acid chain: Heat-inducible transcription repressor HrcA (347 aa).

It belongs to the HrcA family.

Negative regulator of class I heat shock genes (grpE-dnaK-dnaJ and groELS operons). Prevents heat-shock induction of these operons. In Mycobacterium sp. (strain JLS), this protein is Heat-inducible transcription repressor HrcA.